The following is a 38-amino-acid chain: Photosystem II reaction center protein X (38 aa).

The helical transmembrane segment at Ile-9 to Ile-29 threads the bilayer.

It belongs to the PsbX family. Type 1 subfamily. As to quaternary structure, PSII is composed of 1 copy each of membrane proteins PsbA, PsbB, PsbC, PsbD, PsbE, PsbF, PsbH, PsbI, PsbJ, PsbK, PsbL, PsbM, PsbT, PsbX, PsbY, PsbZ, Psb30/Ycf12, at least 3 peripheral proteins of the oxygen-evolving complex and a large number of cofactors. It forms dimeric complexes.

It is found in the plastid. It localises to the chloroplast thylakoid membrane. In terms of biological role, involved in the binding and/or turnover of quinones at the Q(B) site of photosystem II (PSII). PSII is a light-driven water plastoquinone oxidoreductase, using light energy to abstract electrons from H(2)O, generating a proton gradient subsequently used for ATP formation. The polypeptide is Photosystem II reaction center protein X (Phaeodactylum tricornutum (strain CCAP 1055/1)).